Reading from the N-terminus, the 642-residue chain is G protein-coupled receptor kinase 1 (642 aa).

The tract at residues 1 to 202 is N-terminal; the sequence is MEIENIVANT…LEKRPVDKHT (202 aa). The RGS domain occupies 52–188; the sequence is YAFVVEKQPI…AESMYFHRFL (137 aa). Residues 203–470 form the Protein kinase domain; sequence FRLYRVLGKG…AEEIRAHPFF (268 aa). ATP contacts are provided by residues 209-217 and K232; that span reads LGKGGFGEV. Residue D328 is the Proton acceptor of the active site. Residues 480 to 545 enclose the AGC-kinase C-terminal domain; it reads EPVPWKKMEA…GCVSIPWQSE (66 aa). A disordered region spans residues 612-642; that stretch reads VEQQQPPKTSTQTPAVRSSRAASASGRTLVI. Low complexity predominate over residues 614–636; sequence QQQPPKTSTQTPAVRSSRAASAS.

The protein belongs to the protein kinase superfamily. AGC Ser/Thr protein kinase family. GPRK subfamily.

It catalyses the reaction [G-protein-coupled receptor] + ATP = [G-protein-coupled receptor]-phosphate + ADP + H(+). Its function is as follows. Specifically phosphorylates the activated forms of G protein-coupled receptors. This is G protein-coupled receptor kinase 1 (grk-1) from Caenorhabditis elegans.